Here is a 118-residue protein sequence, read N- to C-terminus: Ribonuclease P protein component (118 aa).

It belongs to the RnpA family. As to quaternary structure, consists of a catalytic RNA component (M1 or rnpB) and a protein subunit.

It carries out the reaction Endonucleolytic cleavage of RNA, removing 5'-extranucleotides from tRNA precursor.. RNaseP catalyzes the removal of the 5'-leader sequence from pre-tRNA to produce the mature 5'-terminus. It can also cleave other RNA substrates such as 4.5S RNA. The protein component plays an auxiliary but essential role in vivo by binding to the 5'-leader sequence and broadening the substrate specificity of the ribozyme. The polypeptide is Ribonuclease P protein component (Enterococcus faecalis (strain ATCC 700802 / V583)).